A 309-amino-acid chain; its full sequence is Pyridoxal 5'-phosphate synthase subunit PDX1.3 (309 aa).

Met1 is subject to N-acetylmethionine. Asp40 contributes to the D-ribose 5-phosphate binding site. Lys97 (schiff-base intermediate with D-ribose 5-phosphate) is an active-site residue. Gly169 serves as a coordination point for D-ribose 5-phosphate. Residue Arg181 participates in D-glyceraldehyde 3-phosphate binding. D-ribose 5-phosphate-binding positions include Gly230 and 251-252 (GS).

It belongs to the PdxS/SNZ family. In terms of assembly, homodimer or heterodimer with PDX1.1 or PDX1.2. Interacts with PDX2. In terms of tissue distribution, expressed in cotyledons, rapidly dividing root stele tissues, stems, leaves, flowers, mature pollen, and siliques.

Its subcellular location is the cytoplasm. It localises to the cell membrane. It is found in the membrane. It carries out the reaction aldehydo-D-ribose 5-phosphate + D-glyceraldehyde 3-phosphate + L-glutamine = pyridoxal 5'-phosphate + L-glutamate + phosphate + 3 H2O + H(+). The protein operates within cofactor biosynthesis; pyridoxal 5'-phosphate biosynthesis. Catalyzes the formation of pyridoxal 5'-phosphate from ribose 5-phosphate (RBP), glyceraldehyde 3-phosphate (G3P) and ammonia. The ammonia is provided by PDX2. Can also use ribulose 5-phosphate and dihydroxyacetone phosphate as substrates, resulting from enzyme-catalyzed isomerization of RBP and G3P, respectively. Also plays an indirect role in resistance to singlet oxygen-generating photosensitizers. The sequence is that of Pyridoxal 5'-phosphate synthase subunit PDX1.3 (PDX13) from Arabidopsis thaliana (Mouse-ear cress).